The primary structure comprises 1059 residues: Carbamoyl phosphate synthase large chain (1059 aa).

The segment at 1-401 (MPKRTDIHKI…ALLKAVASLE (401 aa)) is carboxyphosphate synthetic domain. Positions 129, 169, 175, 176, 208, 210, 215, 241, 242, 243, 284, and 298 each coordinate ATP. The ATP-grasp 1 domain occupies 133-327 (KELMQELGEP…IAKLAAKIAV (195 aa)). Mg(2+) is bound by residues Q284, E298, and N300. Mn(2+) is bound by residues Q284, E298, and N300. The tract at residues 402 to 546 (IDQKDLLSKE…YSTYETENES (145 aa)) is oligomerization domain. The tract at residues 547–929 (RRSAKPSVLV…ALYKAFAGAG (383 aa)) is carbamoyl phosphate synthetic domain. Residues 671 to 861 (DQVIKDLNLR…MAQLATKVIL (191 aa)) enclose the ATP-grasp 2 domain. Residues R707, A746, L748, E752, G777, V778, H779, S780, Q820, and E832 each coordinate ATP. Mg(2+)-binding residues include Q820, E832, and N834. Q820, E832, and N834 together coordinate Mn(2+). The region spanning 930 to 1059 (MEVPDNGAVL…EMTSFKTTEL (130 aa)) is the MGS-like domain. The segment at 930-1059 (MEVPDNGAVL…EMTSFKTTEL (130 aa)) is allosteric domain.

The protein belongs to the CarB family. Composed of two chains; the small (or glutamine) chain promotes the hydrolysis of glutamine to ammonia, which is used by the large (or ammonia) chain to synthesize carbamoyl phosphate. Tetramer of heterodimers (alpha,beta)4. It depends on Mg(2+) as a cofactor. Mn(2+) serves as cofactor.

The catalysed reaction is hydrogencarbonate + L-glutamine + 2 ATP + H2O = carbamoyl phosphate + L-glutamate + 2 ADP + phosphate + 2 H(+). The enzyme catalyses hydrogencarbonate + NH4(+) + 2 ATP = carbamoyl phosphate + 2 ADP + phosphate + 2 H(+). It functions in the pathway amino-acid biosynthesis; L-arginine biosynthesis; carbamoyl phosphate from bicarbonate: step 1/1. Its pathway is pyrimidine metabolism; UMP biosynthesis via de novo pathway; (S)-dihydroorotate from bicarbonate: step 1/3. Large subunit of the glutamine-dependent carbamoyl phosphate synthetase (CPSase). CPSase catalyzes the formation of carbamoyl phosphate from the ammonia moiety of glutamine, carbonate, and phosphate donated by ATP, constituting the first step of 2 biosynthetic pathways, one leading to arginine and/or urea and the other to pyrimidine nucleotides. The large subunit (synthetase) binds the substrates ammonia (free or transferred from glutamine from the small subunit), hydrogencarbonate and ATP and carries out an ATP-coupled ligase reaction, activating hydrogencarbonate by forming carboxy phosphate which reacts with ammonia to form carbamoyl phosphate. The chain is Carbamoyl phosphate synthase large chain from Limosilactobacillus fermentum (strain NBRC 3956 / LMG 18251) (Lactobacillus fermentum).